A 447-amino-acid chain; its full sequence is Na(+)-translocating NADH-quinone reductase subunit A (447 aa).

It belongs to the NqrA family. Composed of six subunits; NqrA, NqrB, NqrC, NqrD, NqrE and NqrF.

The catalysed reaction is a ubiquinone + n Na(+)(in) + NADH + H(+) = a ubiquinol + n Na(+)(out) + NAD(+). Its function is as follows. NQR complex catalyzes the reduction of ubiquinone-1 to ubiquinol by two successive reactions, coupled with the transport of Na(+) ions from the cytoplasm to the periplasm. NqrA to NqrE are probably involved in the second step, the conversion of ubisemiquinone to ubiquinol. The protein is Na(+)-translocating NADH-quinone reductase subunit A of Yersinia pestis bv. Antiqua (strain Angola).